Here is a 303-residue protein sequence, read N- to C-terminus: Probable endonuclease 4 (303 aa).

9 residues coordinate Zn(2+): His-75, His-115, Glu-151, Asp-185, His-188, His-221, Asp-234, His-236, and Glu-266.

This sequence belongs to the AP endonuclease 2 family. The cofactor is Zn(2+).

It catalyses the reaction Endonucleolytic cleavage to 5'-phosphooligonucleotide end-products.. In terms of biological role, endonuclease IV plays a role in DNA repair. It cleaves phosphodiester bonds at apurinic or apyrimidinic (AP) sites, generating a 3'-hydroxyl group and a 5'-terminal sugar phosphate. The sequence is that of Probable endonuclease 4 from Ureaplasma parvum serovar 3 (strain ATCC 700970).